A 702-amino-acid polypeptide reads, in one-letter code: Mesothelin-like protein (702 aa).

Residues 1 to 35 (MAAAVTIPGPRIGALQSSGLTLLLSLAAHCSGPQA) form the signal peptide. The Extracellular portion of the chain corresponds to 36 to 638 (KVLSPGGLDA…AQASTSGSLW (603 aa)). N-linked (GlcNAc...) asparagine glycosylation is found at Asn-122, Asn-307, and Asn-424. Positions 588–611 (QLGLDASPTSPTGPAHGTRGPPST) are disordered. A helical membrane pass occupies residues 639–668 (APLGYLPLAMALPCSLLCLLHWGTCILVSV). Over 669–702 (DSVASGWLGSQGSGAGKTEVLDSAGRPLGLTGQL) the chain is Cytoplasmic.

Belongs to the mesothelin family.

The protein resides in the membrane. In terms of biological role, may play a role in cellular adhesion. The protein is Mesothelin-like protein (MSLNL) of Homo sapiens (Human).